The following is a 439-amino-acid chain: Enolase (439 aa).

2 residues coordinate substrate: histidine 157 and glutamate 166. Catalysis depends on glutamate 209, which acts as the Proton donor. Mg(2+)-binding residues include aspartate 244, glutamate 297, and aspartate 324. 2 residues coordinate substrate: glutamate 297 and aspartate 324. Lysine 349 functions as the Proton acceptor in the catalytic mechanism. Substrate is bound by residues 376–379 (SHRS) and lysine 400.

Belongs to the enolase family. In terms of assembly, homodimer. It depends on Mg(2+) as a cofactor.

It localises to the cytoplasm. The enzyme catalyses (2R)-2-phosphoglycerate = phosphoenolpyruvate + H2O. It functions in the pathway carbohydrate degradation; glycolysis; pyruvate from D-glyceraldehyde 3-phosphate: step 4/5. This Mastigamoeba balamuthi (Phreatamoeba balamuthi) protein is Enolase (ENOL).